The chain runs to 602 residues: Elongation factor 4 (602 aa).

A tr-type G domain is found at 6–188 (DHIRNFSIVA…AIVTQLPAPK (183 aa)). Residues 18-23 (DHGKST) and 135-138 (NKID) contribute to the GTP site.

Belongs to the TRAFAC class translation factor GTPase superfamily. Classic translation factor GTPase family. LepA subfamily.

It localises to the cell inner membrane. The enzyme catalyses GTP + H2O = GDP + phosphate + H(+). Functionally, required for accurate and efficient protein synthesis under certain stress conditions. May act as a fidelity factor of the translation reaction, by catalyzing a one-codon backward translocation of tRNAs on improperly translocated ribosomes. Back-translocation proceeds from a post-translocation (POST) complex to a pre-translocation (PRE) complex, thus giving elongation factor G a second chance to translocate the tRNAs correctly. Binds to ribosomes in a GTP-dependent manner. This chain is Elongation factor 4, found in Brucella anthropi (strain ATCC 49188 / DSM 6882 / CCUG 24695 / JCM 21032 / LMG 3331 / NBRC 15819 / NCTC 12168 / Alc 37) (Ochrobactrum anthropi).